The sequence spans 505 residues: Glycerol kinase (505 aa).

ADP is bound at residue T13. ATP contacts are provided by T13, T14, and S15. T13 is a binding site for sn-glycerol 3-phosphate. R17 serves as a coordination point for ADP. Sn-glycerol 3-phosphate contacts are provided by R83, E84, Y135, and D247. Glycerol contacts are provided by R83, E84, Y135, D247, and Q248. T269 and G313 together coordinate ADP. T269, G313, Q317, and G414 together coordinate ATP. The ADP site is built by G414 and N418.

This sequence belongs to the FGGY kinase family.

It catalyses the reaction glycerol + ATP = sn-glycerol 3-phosphate + ADP + H(+). Its pathway is polyol metabolism; glycerol degradation via glycerol kinase pathway; sn-glycerol 3-phosphate from glycerol: step 1/1. With respect to regulation, inhibited by fructose 1,6-bisphosphate (FBP). Its function is as follows. Key enzyme in the regulation of glycerol uptake and metabolism. Catalyzes the phosphorylation of glycerol to yield sn-glycerol 3-phosphate. The polypeptide is Glycerol kinase (Clavibacter michiganensis subsp. michiganensis (strain NCPPB 382)).